The following is a 446-amino-acid chain: Forkhead box protein F2 (446 aa).

Residues Met-1 to Pro-18 are compositionally biased toward pro residues. Residues Met-1–Arg-97 form a disordered region. The segment covering Ser-45–Ser-78 has biased composition (low complexity). A DNA-binding region (fork-head) is located at residues Lys-100 to Arg-194. Disordered regions lie at residues Ala-257–Pro-278, Gly-304–Met-325, and Ala-340–Pro-371. Residues Ala-263–Pro-274 show a composition bias toward basic residues. A compositionally biased stretch (low complexity) spans Gly-311–Met-325.

As to quaternary structure, interacts with the transcription factors TBP and TFIIB. As to expression, uniquely expressed in the bronchiolar epithelium and in type II pneumocytes.

The protein resides in the nucleus. Probable transcription activator for a number of lung-specific genes. Mediates up-regulation of the E3 ligase IRF2BPL and drives ubiquitination and degradation of CTNNB1. In Mus musculus (Mouse), this protein is Forkhead box protein F2 (Foxf2).